A 239-amino-acid polypeptide reads, in one-letter code: MEEIRAWRHVFKLDPNKPIDDERLERLCESGTDAVIVGGTDGVTLDGVLDLLARIRRFSVPCALEVTDIEALTPGFDAYLIPMVLNSCRVDWVIGRHHEAVKQYGDVMNWDEIFAEGYCILNGECKAAKLTEANTALDDDDVVAYARLAEHLYKLPIFYLEYSGTYGNPSLVEKVKRALSRTQLVYGGGIMTPEQAAEMARYADTVVVGNAVYDSFESALATVEAVKRIDGENEISGVK.

Residue lysine 12 coordinates sn-glycerol 1-phosphate. Mg(2+) is bound by residues aspartate 14 and threonine 40. Sn-glycerol 1-phosphate-binding positions include 159 to 164 (YLEYSG), glycine 189, and 209 to 210 (GN).

The protein belongs to the GGGP/HepGP synthase family. Group I subfamily. In terms of assembly, homodimer. The cofactor is Mg(2+).

It catalyses the reaction sn-glycerol 1-phosphate + all-trans-heptaprenyl diphosphate = 3-heptaprenyl-sn-glycero-1-phosphate + diphosphate. It functions in the pathway membrane lipid metabolism; glycerophospholipid metabolism. Prenyltransferase that catalyzes in vivo the transfer of the heptaprenyl moiety of heptaprenyl pyrophosphate (HepPP; 35 carbon atoms) to the C3 hydroxyl of sn-glycerol-1-phosphate (G1P), producing heptaprenylglyceryl phosphate (HepGP). This reaction is an ether-bond-formation step in the biosynthesis of archaea-type G1P-based membrane lipids found in Bacillales. The polypeptide is Heptaprenylglyceryl phosphate synthase (Geobacillus thermodenitrificans (strain NG80-2)).